The chain runs to 194 residues: uncharacterized protein (194 aa).

This is an uncharacterized protein from Gallus gallus (Chicken).